Here is a 365-residue protein sequence, read N- to C-terminus: 3-isopropylmalate dehydrogenase (365 aa).

Residue 80–91 (GPKWGTGSVRPE) coordinates NAD(+). Positions 98, 108, 137, and 226 each coordinate substrate. Asp226, Asp251, and Asp255 together coordinate Mg(2+). Position 290-301 (290-301 (GSAPDLPKGKVN)) interacts with NAD(+).

Belongs to the isocitrate and isopropylmalate dehydrogenases family. As to quaternary structure, homodimer. The cofactor is Mg(2+). Mn(2+) is required as a cofactor.

It localises to the cytoplasm. It carries out the reaction (2R,3S)-3-isopropylmalate + NAD(+) = 4-methyl-2-oxopentanoate + CO2 + NADH. It functions in the pathway amino-acid biosynthesis; L-leucine biosynthesis; L-leucine from 3-methyl-2-oxobutanoate: step 3/4. In terms of biological role, catalyzes the oxidation of 3-carboxy-2-hydroxy-4-methylpentanoate (3-isopropylmalate) to 3-carboxy-4-methyl-2-oxopentanoate. The product decarboxylates to 4-methyl-2 oxopentanoate. This chain is 3-isopropylmalate dehydrogenase (LEU2), found in Maudiozyma exigua (Yeast).